We begin with the raw amino-acid sequence, 493 residues long: Alpha-amylase-related protein (493 aa).

Positions 1–19 are cleaved as a signal peptide; that stretch reads MFKLALTLTLCLAGSLSLA. Q20 is subject to Pyrrolidone carboxylic acid. A disulfide bond links C47 and C103. Ca(2+)-binding residues include N117, Q168, and D177. The cysteines at positions 156 and 170 are disulfide-linked. R205 is a binding site for chloride. D207 (nucleophile) is an active-site residue. H211 contacts Ca(2+). Residue E244 is the Proton donor of the active site. Residues N307 and R342 each contribute to the chloride site. 3 disulfides stabilise this stretch: C375-C381, C417-C440, and C447-C459.

It belongs to the glycosyl hydrolase 13 family. Monomer. Ca(2+) is required as a cofactor. The cofactor is chloride.

The protein localises to the secreted. The enzyme catalyses Endohydrolysis of (1-&gt;4)-alpha-D-glucosidic linkages in polysaccharides containing three or more (1-&gt;4)-alpha-linked D-glucose units.. This is Alpha-amylase-related protein (Amyrel) from Drosophila yakuba (Fruit fly).